Here is a 472-residue protein sequence, read N- to C-terminus: Aspartyl/glutamyl-tRNA(Asn/Gln) amidotransferase subunit B (472 aa).

The protein belongs to the GatB/GatE family. GatB subfamily. As to quaternary structure, heterotrimer of A, B and C subunits.

It catalyses the reaction L-glutamyl-tRNA(Gln) + L-glutamine + ATP + H2O = L-glutaminyl-tRNA(Gln) + L-glutamate + ADP + phosphate + H(+). The enzyme catalyses L-aspartyl-tRNA(Asn) + L-glutamine + ATP + H2O = L-asparaginyl-tRNA(Asn) + L-glutamate + ADP + phosphate + 2 H(+). In terms of biological role, allows the formation of correctly charged Asn-tRNA(Asn) or Gln-tRNA(Gln) through the transamidation of misacylated Asp-tRNA(Asn) or Glu-tRNA(Gln) in organisms which lack either or both of asparaginyl-tRNA or glutaminyl-tRNA synthetases. The reaction takes place in the presence of glutamine and ATP through an activated phospho-Asp-tRNA(Asn) or phospho-Glu-tRNA(Gln). The polypeptide is Aspartyl/glutamyl-tRNA(Asn/Gln) amidotransferase subunit B (Campylobacter jejuni subsp. jejuni serotype O:2 (strain ATCC 700819 / NCTC 11168)).